The sequence spans 449 residues: Gamma-aminobutyric acid receptor subunit delta (449 aa).

Positions 1 to 24 are cleaved as a signal peptide; sequence MDVLGWLLLPLLLLCTQPHHGARA. Residues 25–251 lie on the Extracellular side of the membrane; that stretch reads MNDIGDYVGS…QLRRNRGVYI (227 aa). N-linked (GlcNAc...) asparagine glycans are attached at residues Asn103 and Asn106. Cys164 and Cys178 form a disulfide bridge. Residues 252-271 traverse the membrane as a helical segment; it reads IQSYMPSVLLVAMSWVSFWI. At 272–275 the chain is on the cytoplasmic side; the sequence is SQAA. A helical transmembrane segment spans residues 276–298; that stretch reads VPARVSLGITTVLTMTTLMVSAR. The Extracellular segment spans residues 299–308; the sequence is SSLPRASAIK. The chain crosses the membrane as a helical span at residues 309-331; that stretch reads ALDVYFWICYVFVFAALVEYAFA. The Cytoplasmic portion of the chain corresponds to 332-423; the sequence is HFNADYRKKR…SRLKPIDADT (92 aa). Phosphoserine is present on Ser390. A helical membrane pass occupies residues 424–446; sequence IDIYARAVFPAAFAAVNIIYWAA. Topologically, residues 447–449 are extracellular; the sequence is YTM.

Belongs to the ligand-gated ion channel (TC 1.A.9) family. Gamma-aminobutyric acid receptor (TC 1.A.9.5) subfamily. GABRD sub-subfamily. As to quaternary structure, heteropentamer, formed by a combination of alpha (GABRA1-6), beta (GABRB1-3), gamma (GABRG1-3), delta (GABRD), epsilon (GABRE), rho (GABRR1-3), pi (GABRP) and theta (GABRQ) chains, each subunit exhibiting distinct physiological and pharmacological properties. Found in the brain, in cerebellar granule cells. Expressed in lungs, in alveolar epithelium.

It localises to the cell membrane. The enzyme catalyses chloride(in) = chloride(out). Its function is as follows. Delta subunit of the heteropentameric ligand-gated chloride channel gated by gamma-aminobutyric acid (GABA), a major inhibitory neurotransmitter in the brain. GABA-gated chloride channels, also named GABA(A) receptors (GABAAR), consist of five subunits arranged around a central pore and contain GABA active binding site(s) located at the alpha and beta subunit interface(s). When activated by GABA, GABAARs selectively allow the flow of chloride anions across the cell membrane down their electrochemical gradient. GABAARs containing delta/GABRD subunits are predominantly expressed and located in extrasynaptic or perisynaptic positions on hippocampus and cerebellar granule cells, and contribute to the tonic GABAergic inhibition. GABAAR containing alpha-4-beta-3-delta subunits can simultaneously bind GABA and histamine where histamine binds at the interface of two neighboring beta subunits, which may be involved in the regulation of sleep and wakefulness. This Rattus norvegicus (Rat) protein is Gamma-aminobutyric acid receptor subunit delta.